A 128-amino-acid chain; its full sequence is Prokineticin-2 (128 aa).

Residues 1 to 26 form the signal peptide; sequence MGDPRCAPLLLLLLLPLLFTPPAGDA. 5 disulfide bridges follow: Cys-33/Cys-45, Cys-39/Cys-57, Cys-44/Cys-106, Cys-67/Cys-114, and Cys-108/Cys-124.

This sequence belongs to the AVIT (prokineticin) family. In terms of tissue distribution, expressed in the SCN and among a few other discrete brain areas, including the islands of Calleja, media l preoptic area of the hypothalamus and the shell of the nucleus accumbens. Highly expressed in testis. In the SCN, expression subjected to high amplitude of circadian oscillation.

The protein localises to the secreted. Functionally, may function as an output molecule from the suprachiasmatic nucleus (SCN) that transmits behavioral circadian rhythm. May also function locally within the SCN to synchronize output. Potently contracts gastrointestinal (GI) smooth muscle. The chain is Prokineticin-2 (Prok2) from Mus musculus (Mouse).